Here is a 408-residue protein sequence, read N- to C-terminus: Peptidase T (408 aa).

His78 lines the Zn(2+) pocket. Residue Asp80 is part of the active site. Zn(2+) is bound at residue Asp141. Glu175 acts as the Proton acceptor in catalysis. The Zn(2+) site is built by Glu176, Asp198, and His380.

Belongs to the peptidase M20B family. Zn(2+) serves as cofactor.

The protein resides in the cytoplasm. It catalyses the reaction Release of the N-terminal residue from a tripeptide.. Its function is as follows. Cleaves the N-terminal amino acid of tripeptides. The polypeptide is Peptidase T (Clostridium botulinum (strain Loch Maree / Type A3)).